The following is a 442-amino-acid chain: 3-oxoacyl-[acyl-carrier-protein] synthase homolog (442 aa).

Residues 2–438 (SRRVVITGLG…GVNTSLLFKK (437 aa)) enclose the Ketosynthase family 3 (KS3) domain. Residues C187, H322, and H362 each act as for beta-ketoacyl synthase activity in the active site.

The protein belongs to the thiolase-like superfamily. Beta-ketoacyl-ACP synthases family.

It is found in the mitochondrion. The catalysed reaction is a fatty acyl-[ACP] + malonyl-[ACP] + H(+) = a 3-oxoacyl-[ACP] + holo-[ACP] + CO2. Possibly involved in the synthesis of a specialized molecule, probably related to a fatty acid, which is essential for mitochondrial respiration. Is essential for oxygen uptake and the presence of cytochromes A and B. In Saccharomyces cerevisiae (strain ATCC 204508 / S288c) (Baker's yeast), this protein is 3-oxoacyl-[acyl-carrier-protein] synthase homolog (CEM1).